Reading from the N-terminus, the 329-residue chain is Carbonic anhydrase (329 aa).

A chloroplast transit peptide-like region spans residues 1 to 108 (MSTASAFAIN…AAARIDQITA (108 aa)).

It belongs to the beta-class carbonic anhydrase family. As to quaternary structure, homohexamer.

It is found in the cytoplasm. It catalyses the reaction hydrogencarbonate + H(+) = CO2 + H2O. Its function is as follows. Reversible hydration of carbon dioxide. The sequence is that of Carbonic anhydrase from Flaveria pringlei.